Reading from the N-terminus, the 485-residue chain is ATP synthase subunit beta (485 aa).

An ATP-binding site is contributed by 170 to 177 (GGAGVGKT).

This sequence belongs to the ATPase alpha/beta chains family. In terms of assembly, F-type ATPases have 2 components, CF(1) - the catalytic core - and CF(0) - the membrane proton channel. CF(1) has five subunits: alpha(3), beta(3), gamma(1), delta(1), epsilon(1). CF(0) has three main subunits: a(1), b(2) and c(9-12). The alpha and beta chains form an alternating ring which encloses part of the gamma chain. CF(1) is attached to CF(0) by a central stalk formed by the gamma and epsilon chains, while a peripheral stalk is formed by the delta and b chains.

Its subcellular location is the cell membrane. The catalysed reaction is ATP + H2O + 4 H(+)(in) = ADP + phosphate + 5 H(+)(out). In terms of biological role, produces ATP from ADP in the presence of a proton gradient across the membrane. The catalytic sites are hosted primarily by the beta subunits. In Salinispora arenicola (strain CNS-205), this protein is ATP synthase subunit beta.